The following is a 547-amino-acid chain: MSTFGYRRGLSKYESIDEDELLASLSAEELKELERELEDIEPDRNLPVGLRQKSLTEKTPTGTFSREALMAYWEKESQKLLEKERLGECGKVAEDKEESEEELIFTESNSEVSEEVYTEEEEEESQEEEEEEDSDEEERTIETAKGINGTVNYDSVNSDNSKPKIFKSQIENINLTNGSNGRNTESPAAIHPCGNPTVIEDALDKIKSNDPDTTEVNLNNIENITTQTLTRFAEALKDNTVVKTFSLANTHADDSAAMAIAEMLKVNEHITNVNVESNFITGKGILAIMRALQHNTVLTELRFHNQRHIMGSQVEMEIVKLLKENTTLLRLGYHFELPGPRMSMTSILTRNMDKQRQKRLQEQKQQEGYDGGPNLRTKVWQRGTPSSSPYVSPRHSPWSSPKLPKKVQTVRSRPLSPVATPPPPPPPPPPPPPSSQRLPPPPPPPPPPLPEKKLITRNIAEVIKQQESAQRALQNGQKKKKGKKVKKQPNSILKEIKNSLRSVQEKKMEDSSRPSTPQRSAHENLMEAIRGSSIKQLKRVEVPEALR.

The segment at Met-1–Pro-47 is interaction with tropomyosin alpha. Interaction with actin regions lie at residues Met-1 to Ser-161, Lys-162 to Lys-497, and Ala-521 to Val-540. Phosphoserine occurs at positions 11, 15, and 24. Positions Ile-16 to Glu-41 form a coiled coil. Disordered regions lie at residues Lys-91–Lys-162 and Met-352–Ser-533. Acidic residues-rich tracts occupy residues Asp-95–Ile-104 and Val-112–Arg-139. Positions Ser-113–Asn-148 form a coiled coil. A compositionally biased stretch (polar residues) spans Gly-149–Asn-160. Residues Met-352–Glu-367 show a composition bias toward basic and acidic residues. Position 400 is a phosphoserine (Ser-400). The span at Ala-419–Leu-449 shows a compositional bias: pro residues. A compositionally biased stretch (polar residues) spans Gln-465 to Asn-475. A compositionally biased stretch (basic residues) spans Gln-477–Lys-487. Basic and acidic residues predominate over residues Lys-494 to Ser-512. One can recognise a WH2 domain in the interval Ala-521–Val-540.

The protein belongs to the tropomodulin family. In terms of assembly, can bind at least three actin monomers and thereby provides a nucleus for actin filament formation. Interacts (via N-terminus) with tropomyosin alpha (TPM1) (via N-terminus). May also interact with TPM2 (via N-terminus). Interacts with FLII. Specifically expressed in heart and skeletal muscles, with higher levels in heart (at protein level). Not expressed in other tissues.

Its subcellular location is the cytoplasm. The protein resides in the myofibril. It localises to the sarcomere. It is found in the m line. The protein localises to the cytoskeleton. Functionally, mediates nucleation of actin filaments and thereby promotes actin polymerization. Plays a role in the regulation of actin filament length. Required for normal sarcomere organization in the heart, and for normal heart function. This is Leiomodin-2 (LMOD2) from Homo sapiens (Human).